We begin with the raw amino-acid sequence, 246 residues long: Eukaryotic translation initiation factor 6 (246 aa).

A phosphoserine; by CK1 mark is found at S174 and S175.

The protein belongs to the eIF-6 family. As to quaternary structure, monomer. Associates with the 60S ribosomal subunit. Post-translationally, phosphorylation at Ser-174 and Ser-175 promotes nuclear export.

It is found in the cytoplasm. The protein localises to the nucleus. It localises to the nucleolus. In terms of biological role, binds to the 60S ribosomal subunit and prevents its association with the 40S ribosomal subunit to form the 80S initiation complex in the cytoplasm. Is also involved in ribosome biogenesis. Associates with pre-60S subunits in the nucleus and is involved in its nuclear export. The sequence is that of Eukaryotic translation initiation factor 6 from Verticillium alfalfae (strain VaMs.102 / ATCC MYA-4576 / FGSC 10136) (Verticillium wilt of alfalfa).